The following is a 515-amino-acid chain: Mucin-like protein Glc1.8b (515 aa).

The signal sequence occupies residues 1-20 (MSQITLIILVLAIGFSCTKS). At 21–467 (HPINSTRDGE…ANDIKKPAFP (447 aa)) the chain is on the extracellular side. Asn-24, Asn-45, Asn-51, Asn-60, Asn-85, Asn-93, Asn-102, Asn-123, Asn-129, Asn-138, Asn-180, Asn-201, Asn-207, Asn-216, Asn-258, Asn-279, Asn-285, Asn-294, Asn-319, Asn-327, Asn-336, Asn-357, Asn-363, Asn-372, Asn-397, Asn-405, Asn-413, Asn-434, and Asn-441 each carry an N-linked (GlcNAc...) asparagine; by host glycan. Positions 80 to 114 (SKKDENITGQSEINTSAKSQPINSTRDGEDSGTDL) are disordered. Residues 86 to 104 (ITGQSEINTSAKSQPINST) are compositionally biased toward polar residues. Positions 314-358 (SKKDENITGQSEINTSAKSQPINSTRDGEDSGTDLKNLLTDPANT) are disordered. Residues 320–338 (ITGQSEINTSAKSQPINST) show a composition bias toward polar residues. Residues 393–413 (RKDENVTGQSEFNISTNSNLN) form a disordered region. A helical transmembrane segment spans residues 468-488 (YCIILITFQIVTVGMIIYLVF). Residues 489 to 515 (RTMRKPCQSERAIPLNSFGFGNNSSYE) are Cytoplasmic-facing.

Belongs to the polydnaviridae Glc1.8 protein family.

The protein resides in the host membrane. In terms of biological role, involved in suppression of the insect cellular immune response. Inhibits host hemocyte adhesion and phagocytosis. The sequence is that of Mucin-like protein Glc1.8b (O16) from Microplitis demolitor (Parasitoid wasp).